Here is a 2220-residue protein sequence, read N- to C-terminus: Calcineurin-binding protein cabin-1 (2220 aa).

A phosphoserine mark is found at S10 and S11. At T12 the chain carries Phosphothreonine. S20 and S66 each carry phosphoserine. TPR repeat units lie at residues 36–69 (AFAL…SLLR), 90–123 (YSTY…DSTD), and 125–157 (NLWY…NPDH). Residues 361-400 (GAPVGDISGGDKSKKGVKRKKISEESGETAKRRSARVRNT) are disordered. Residues 382–391 (ISEESGETAK) are compositionally biased toward basic and acidic residues. Phosphoserine is present on residues S433 and S450. The stretch at 615-648 (VRVYWLKARFLALQGDMEQALENYDICTEMLQSS) is one TPR 4 repeat. Phosphoserine is present on S673. TPR repeat units lie at residues 1055-1088 (NELY…CPNR) and 1106-1139 (KLNS…DSSN). Disordered regions lie at residues 1299 to 1476 (FARG…STPT), 1668 to 1845 (AEGS…RLSR), 1916 to 2165 (AQRQ…GSIS), and 2197 to 2220 (VLET…YMDI). Over residues 1301–1324 (RGEEKNTPKASEKEKACLVDEDSH) the composition is skewed to basic and acidic residues. Over residues 1327 to 1349 (AGTLPGPGASLPSSSGPGLTSPP) the composition is skewed to low complexity. Over residues 1377–1397 (DSTAVALSDSSSTQDFFNEPT) the composition is skewed to polar residues. Over residues 1402-1412 (GSRKSYTEKRL) the composition is skewed to basic and acidic residues. S1439 carries the phosphoserine modification. Positions 1715–1725 (SGPGPEPGGKV) are enriched in gly residues. Composition is skewed to basic and acidic residues over residues 1744-1753 (SGERKDKESP) and 1784-1794 (PARDRGPESRP). Pro residues predominate over residues 1812–1823 (PLTPAQPAPAPA). Composition is skewed to polar residues over residues 1918–1927 (RQASGDTPTT) and 1975–1989 (TIIT…STLD). T1924 is modified (phosphothreonine). Residues 2070–2081 (GKLRPEPRRDGE) are compositionally biased toward basic and acidic residues. Positions 2091-2112 (PLSSPPTAASSKAPSSGSAQPP) are enriched in low complexity. S2094 bears the Phosphoserine mark. The segment at 2116 to 2153 (PGKPEPSRAKSRPLPNMPKLVIPSAATKFPPEITVTPP) is required for interaction with calcineurin. Phosphothreonine occurs at positions 2151 and 2154. Residues 2207-2220 (LESETDEDDDYMDI) show a composition bias toward acidic residues.

As to quaternary structure, component of a complex that includes at least ASF1A, CABIN1, HIRA, histone H3.3 and UBN1. Interacts with calcineurin. Interacts with MEF2B. Post-translationally, activated through PKC-mediated hyperphosphorylation. Phosphorylation by the DNA damage kinases ATM and CHK2 enhances ubiquitination. Upon genotoxic stress, ubiquitination by the DCX(DDB2) E3 ubiquitin-protein ligase complex targets CABIN1 for proteasomal degradation, leading to the release of p53/TP53. As to expression, widely expressed in different tissues.

Its subcellular location is the nucleus. In terms of biological role, may be required for replication-independent chromatin assembly. May serve as a negative regulator of T-cell receptor (TCR) signaling via inhibition of calcineurin. Inhibition of activated calcineurin is dependent on both PKC and calcium signals. Acts as a negative regulator of p53/TP53 by keeping p53 in an inactive state on chromatin at promoters of a subset of it's target genes. This chain is Calcineurin-binding protein cabin-1 (CABIN1), found in Homo sapiens (Human).